Reading from the N-terminus, the 170-residue chain is Translationally-controlled tumor protein homolog (170 aa).

The TCTP domain maps to 1-170; sequence MIIYKCIISG…FKDGLLAEKC (170 aa).

It belongs to the TCTP family.

It localises to the cytoplasm. Its function is as follows. Involved in calcium binding and microtubule stabilization. This is Translationally-controlled tumor protein homolog (tpt1) from Lateolabrax japonicus (Japanese sea perch).